The primary structure comprises 134 residues: Methylglyoxal synthase (134 aa).

The MGS-like domain maps to 1–134 (MVNLNIALIA…GLLEWRNAVK (134 aa)). Substrate contacts are provided by residues His11, Lys15, and 37–40 (TGAT). Asp63 serves as the catalytic Proton donor/acceptor. His90 lines the substrate pocket.

It belongs to the methylglyoxal synthase family.

The enzyme catalyses dihydroxyacetone phosphate = methylglyoxal + phosphate. Functionally, catalyzes the formation of methylglyoxal from dihydroxyacetone phosphate. The protein is Methylglyoxal synthase of Thermoanaerobacterium thermosaccharolyticum (Clostridium thermosaccharolyticum).